The chain runs to 291 residues: Undecaprenyl-diphosphatase (291 aa).

Helical transmembrane passes span 1–21, 48–68, 102–122, 126–146, 162–182, 203–223, 236–256, and 267–287; these read MFIIELIKGIILGVVEGLTEF, SAFTFKIVIQLGSVFAAAWVF, LHVLVGMVPAGILGLLFDDFI, LFSVPTVMIGLFVGAIYMIIA, INYFQAFVIGISQAVAMWPGF, SDFTFIMAVPIMLAASGLSLL, FYILGFLAAFTVGLIAIKTFL, and FAIYRIVLVIFIAILYFGFGI.

The protein belongs to the UppP family.

The protein localises to the cell membrane. The enzyme catalyses di-trans,octa-cis-undecaprenyl diphosphate + H2O = di-trans,octa-cis-undecaprenyl phosphate + phosphate + H(+). Catalyzes the dephosphorylation of undecaprenyl diphosphate (UPP). Confers resistance to bacitracin. This chain is Undecaprenyl-diphosphatase, found in Staphylococcus aureus (strain MSSA476).